Consider the following 55-residue polypeptide: ATP synthase protein 8 (55 aa).

The chain crosses the membrane as a helical span at residues 4-24 (LNPNPWFTILIFTWAVFLTIL).

The protein belongs to the ATPase protein 8 family. F-type ATPases have 2 components, CF(1) - the catalytic core - and CF(0) - the membrane proton channel.

It is found in the mitochondrion membrane. Its function is as follows. Mitochondrial membrane ATP synthase (F(1)F(0) ATP synthase or Complex V) produces ATP from ADP in the presence of a proton gradient across the membrane which is generated by electron transport complexes of the respiratory chain. F-type ATPases consist of two structural domains, F(1) - containing the extramembraneous catalytic core and F(0) - containing the membrane proton channel, linked together by a central stalk and a peripheral stalk. During catalysis, ATP synthesis in the catalytic domain of F(1) is coupled via a rotary mechanism of the central stalk subunits to proton translocation. Part of the complex F(0) domain. Minor subunit located with subunit a in the membrane. This is ATP synthase protein 8 (mt-atp8) from Polypterus ornatipinnis (Ornate bichir).